We begin with the raw amino-acid sequence, 433 residues long: Cell adhesion molecule 2 (433 aa).

The N-terminal stretch at 1–24 (MILQPSALLCLSSLWGVIVQASQG) is a signal peptide. Topologically, residues 25–365 (QFPVTQNVTV…ALPGPVATDH (341 aa)) are extracellular. An Ig-like V-type domain is found at 27–114 (PVTQNVTVVE…SLFTMPVKTS (88 aa)). N-linked (GlcNAc...) asparagine glycosylation is found at N31, N41, and N51. Intrachain disulfides connect C44-C104, C146-C203, and C248-C296. 2 Ig-like C2-type domains span residues 127–217 (PHIS…PQIA) and 227–312 (PTVR…YVLI). N-linked (GlcNAc...) asparagine glycosylation is found at N287 and N291. The chain crosses the membrane as a helical span at residues 366-386 (ALIGGVVAVVVFVTLCSIILI). Topologically, residues 387-433 (GRYLARHKGTYLTNEAKGAEDAPDADTAIINAEGSQVNAEEKKEYFI) are cytoplasmic.

It belongs to the nectin family.

It is found in the membrane. The protein is Cell adhesion molecule 2 (cadm2) of Xenopus tropicalis (Western clawed frog).